A 1052-amino-acid chain; its full sequence is Kruppel-like factor 18 (1052 aa).

3 C2H2-type zinc fingers span residues 964-988, 994-1018, and 1024-1046; these read YVCT…MRKH, YVCD…KKRH, and YLCS…AKVH.

It belongs to the krueppel C2H2-type zinc-finger protein family.

The protein localises to the nucleus. The polypeptide is Kruppel-like factor 18 (Homo sapiens (Human)).